The chain runs to 262 residues: Cell division protein FtsQ (262 aa).

The Cytoplasmic portion of the chain corresponds to M1–Y20. The chain crosses the membrane as a helical span at residues L21–L41. Topologically, residues L42–R262 are periplasmic. One can recognise a POTRA domain in the interval L52–Q121.

The protein belongs to the FtsQ/DivIB family. FtsQ subfamily. In terms of assembly, part of a complex composed of FtsB, FtsL and FtsQ.

It localises to the cell inner membrane. Essential cell division protein. May link together the upstream cell division proteins, which are predominantly cytoplasmic, with the downstream cell division proteins, which are predominantly periplasmic. May control correct divisome assembly. The chain is Cell division protein FtsQ from Shewanella oneidensis (strain ATCC 700550 / JCM 31522 / CIP 106686 / LMG 19005 / NCIMB 14063 / MR-1).